The sequence spans 999 residues: Hypoxia up-regulated protein 1 (999 aa).

The signal sequence occupies residues 1-32; the sequence is MADKVRRQRPRRRVCWALVAVLLADLLALSDT. Asparagine 155, asparagine 222, and asparagine 515 each carry an N-linked (GlcNAc...) asparagine glycan. At serine 567 the chain carries Phosphoserine. Residues 578 to 694 are disordered; sequence GNTISSLFGG…KKQKPARKRR (117 aa). Residue asparagine 596 is glycosylated (N-linked (GlcNAc...) asparagine). 2 stretches are compositionally biased toward basic and acidic residues: residues 611–626 and 641–672; these read GSKD…KEEA and PKGD…KAEA. 3 N-linked (GlcNAc...) asparagine glycosylation sites follow: asparagine 830, asparagine 862, and asparagine 869. Lysine 883 bears the N6-acetyllysine mark. The interval 909-999 is disordered; the sequence is AKFTKPRPRP…QKRPLKNDEL (91 aa). N-linked (GlcNAc...) asparagine glycosylation is found at asparagine 922 and asparagine 931. The Prevents secretion from ER motif lies at 996 to 999; sequence NDEL.

This sequence belongs to the heat shock protein 70 family. As to quaternary structure, part of a large chaperone multiprotein complex comprising DNAJB11, HSP90B1, HSPA5, HYOU, PDIA2, PDIA4, PDIA6, PPIB, SDF2L1, UGGT1 and very small amounts of ERP29, but not, or at very low levels, CALR nor CANX. In terms of tissue distribution, highly expressed in tissues that contain well-developed endoplasmic reticulum and synthesize large amounts of secretory proteins. Highly expressed in liver and pancreas and lower expression in brain and kidney. Also expressed in macrophages within aortic atherosclerotic plaques, and in breast cancers.

The protein localises to the endoplasmic reticulum lumen. Has a pivotal role in cytoprotective cellular mechanisms triggered by oxygen deprivation. Promotes HSPA5/BiP-mediated ATP nucleotide exchange and thereby activates the unfolded protein response (UPR) pathway in the presence of endoplasmic reticulum stress. May play a role as a molecular chaperone and participate in protein folding. The polypeptide is Hypoxia up-regulated protein 1 (HYOU1) (Homo sapiens (Human)).